A 343-amino-acid polypeptide reads, in one-letter code: 4-hydroxy-2-oxovalerate aldolase (343 aa).

Positions 4-254 constitute a Pyruvate carboxyltransferase domain; sequence PRLTDTTLRD…NPGLDVFGLM (251 aa). Residue 12–13 coordinates substrate; the sequence is RD. Mn(2+) is bound at residue aspartate 13. Histidine 16 (proton acceptor) is an active-site residue. Serine 166 and histidine 193 together coordinate substrate. Residues histidine 193 and histidine 195 each contribute to the Mn(2+) site. Tyrosine 284 contacts substrate.

It belongs to the 4-hydroxy-2-oxovalerate aldolase family.

It carries out the reaction (S)-4-hydroxy-2-oxopentanoate = acetaldehyde + pyruvate. The sequence is that of 4-hydroxy-2-oxovalerate aldolase from Chloroflexus aggregans (strain MD-66 / DSM 9485).